The sequence spans 185 residues: Photosystem I assembly protein Ycf4 (185 aa).

2 helical membrane-spanning segments follow: residues 20 to 40 (GNFF…SVGA) and 57 to 77 (ILFF…LFIS).

It belongs to the Ycf4 family.

The protein localises to the plastid. The protein resides in the chloroplast thylakoid membrane. Functionally, seems to be required for the assembly of the photosystem I complex. The sequence is that of Photosystem I assembly protein Ycf4 from Agrostis stolonifera (Creeping bentgrass).